Consider the following 415-residue polypeptide: Probable glucan 1,3-beta-glucosidase A (415 aa).

Positions 1 to 22 (MLSRLSQTALVALSLMTVLTEA) are cleaved as a signal peptide. The active-site Proton donor is E210. Intrachain disulfides connect C290-C414 and C315-C341. E307 acts as the Nucleophile in catalysis. Residues 335–359 (SPRYGDCGNKRQGSSSGLSEQERSD) form a disordered region.

The protein belongs to the glycosyl hydrolase 5 (cellulase A) family. As to quaternary structure, monomer. The cofactor is Mn(2+).

The protein localises to the secreted. It carries out the reaction Successive hydrolysis of beta-D-glucose units from the non-reducing ends of (1-&gt;3)-beta-D-glucans, releasing alpha-glucose.. Beta-glucanases participate in the metabolism of beta-glucan, the main structural component of the cell wall. It could also function biosynthetically as a transglycosylase. This is Probable glucan 1,3-beta-glucosidase A (exgA) from Aspergillus clavatus (strain ATCC 1007 / CBS 513.65 / DSM 816 / NCTC 3887 / NRRL 1 / QM 1276 / 107).